Consider the following 193-residue polypeptide: MRGRDEDTGEFRGASRSQQRREALEIFDLGEKLVALTPAQLAKLPVPESLIQHIEESKRITSHIAHKRQLAFLAKHMRREDDETLAAIRDALDANSDTARREVAAIHRVERWRERLLADGDVALAELLEAYPAADRQQLRQLVRNAIHERAKNKPPRAYRELFQVLRDLSQEQGLESGDSGLEDGESALEDDE.

The span at Met-1 to Glu-10 shows a compositional bias: basic and acidic residues. Disordered stretches follow at residues Met-1 to Arg-20 and Gln-171 to Glu-193. The span at Gly-181–Glu-193 shows a compositional bias: acidic residues.

It belongs to the DarP family.

The protein resides in the cytoplasm. Member of a network of 50S ribosomal subunit biogenesis factors which assembles along the 30S-50S interface, preventing incorrect 23S rRNA structures from forming. Promotes peptidyl transferase center (PTC) maturation. This is Dual-action ribosomal maturation protein DarP from Xanthomonas oryzae pv. oryzae (strain KACC10331 / KXO85).